The sequence spans 247 residues: Proteasome subunit alpha type-7 (247 aa).

It belongs to the peptidase T1A family. The 26S proteasome consists of a 20S proteasome core and two 19S regulatory subunits. The 20S proteasome core is composed of 28 subunits that are arranged in four stacked rings, resulting in a barrel-shaped structure. The two end rings are each formed by seven alpha subunits, and the two central rings are each formed by seven beta subunits. The catalytic chamber with the active sites is on the inside of the barrel.

It localises to the cytoplasm. It is found in the nucleus. The proteasome is a multicatalytic proteinase complex which is characterized by its ability to cleave peptides with Arg, Phe, Tyr, Leu, and Glu adjacent to the leaving group at neutral or slightly basic pH. The proteasome has an ATP-dependent proteolytic activity. The chain is Proteasome subunit alpha type-7 (PSA4) from Trypanosoma brucei brucei.